The chain runs to 208 residues: UPF0301 protein MAB_4928c (208 aa).

It belongs to the UPF0301 (AlgH) family.

The protein is UPF0301 protein MAB_4928c of Mycobacteroides abscessus (strain ATCC 19977 / DSM 44196 / CCUG 20993 / CIP 104536 / JCM 13569 / NCTC 13031 / TMC 1543 / L948) (Mycobacterium abscessus).